The primary structure comprises 273 residues: Ribosomal RNA small subunit methyltransferase A (273 aa).

Residues N18, L20, G45, E66, D91, and N113 each contribute to the S-adenosyl-L-methionine site.

The protein belongs to the class I-like SAM-binding methyltransferase superfamily. rRNA adenine N(6)-methyltransferase family. RsmA subfamily.

The protein resides in the cytoplasm. The enzyme catalyses adenosine(1518)/adenosine(1519) in 16S rRNA + 4 S-adenosyl-L-methionine = N(6)-dimethyladenosine(1518)/N(6)-dimethyladenosine(1519) in 16S rRNA + 4 S-adenosyl-L-homocysteine + 4 H(+). Its function is as follows. Specifically dimethylates two adjacent adenosines (A1518 and A1519) in the loop of a conserved hairpin near the 3'-end of 16S rRNA in the 30S particle. May play a critical role in biogenesis of 30S subunits. The sequence is that of Ribosomal RNA small subunit methyltransferase A from Shigella flexneri.